A 697-amino-acid polypeptide reads, in one-letter code: MIHTKTGSGRRILTFPTVEPSESISIVTLLDSLIQLAGDILTFKSKHFSTNKQSFRETLRRIQNLLVVFEEIRIRIRNSRRYFHDSAAASSLKEIHVGFQKLKFLLEDCTRDGARLCMMMNSDQVSDHLRVLTRSISTSLSAFPVASVDLTTEVNELIDLVVRQARKYGVQPETNDKRAVSSINRILALFVNRVVPDPDEINRILDHVGIRKWGDCVKEINFLGEEIDAERLDEKKKKSSDQVELLSSLMGFICYCRCIILGRIERDDHHNHHEDGIKKDHDLIRGLKVEDLLCPISLEIMTDPVVIETGHTYDRSSITKWFGSGNITCPITGKILTSTELVDNVSVRQVIRKHCKTNGIVLAGISRRRKSHDDVVPESLAAKGAGKLIAKFLTSELINGGEEMIYRAVREIRVQTKTSSFNRSCLVKAGAVTPLLKLLSSVDIRIQENAMAGILNLSKHVTGKSKIAGEGLKILVEILNEGAKTETRLYSASALFYLSSVEDYSRLIGENPDAIPGLMNIVKGDDYGDSAKRSALLAVMGLLMQSDNHWRVLAAGAVPILLDLLRSGEISGGLTADCLATLAKLAEYPDGTIGVIRRGGLKLAVKILSSSEDSPVAVKQHCVGLILNLCLNGGRDVVGVLVKNSLVMGSLYTVLSNGEYGGSKKASALIRMIHEFQERKTGSVEPNLQRGRFVHAW.

The tract at residues 23–210 (SISIVTLLDS…INRILDHVGI (188 aa)) is U-box N-terminal domain (UND) required for EXO70B1 binding and crucial for the negative regulation of ABA-dependent stomatal movement. In terms of domain architecture, U-box spans 287-361 (LKVEDLLCPI…RKHCKTNGIV (75 aa)). 6 ARM repeats span residues 420–459 (SFNR…NLSK), 461–500 (VTGK…YLSS), 502–544 (EDYS…GLLM), 546–587 (SDNH…KLAE), 589–631 (PDGT…NLCL), and 657–696 (NGEY…FVHA).

Interacts with EXO70B1 via its U-box N-terminal domain (UND).

The protein localises to the endomembrane system. The enzyme catalyses S-ubiquitinyl-[E2 ubiquitin-conjugating enzyme]-L-cysteine + [acceptor protein]-L-lysine = [E2 ubiquitin-conjugating enzyme]-L-cysteine + N(6)-ubiquitinyl-[acceptor protein]-L-lysine.. It functions in the pathway protein modification; protein ubiquitination. Functionally, functions as an E3 ubiquitin ligase. Mediates EXO70B1 ubiquitination. Involved in the regulation of abscisic acid (ABA)-mediated stomatal movements. This is U-box domain-containing protein 18 from Arabidopsis thaliana (Mouse-ear cress).